We begin with the raw amino-acid sequence, 518 residues long: 12S seed storage globulin 1 (518 aa).

Positions 1-24 are cleaved as a signal peptide; the sequence is MATTRFPSLLFYSCIFLLCNGSMA. 2 disulfide bridges follow: cysteine 45–cysteine 78 and cysteine 121–cysteine 324. In terms of domain architecture, Cupin type-1 1 spans 50–240; it reads LQAFEPLRQV…ALGISQQAAQ (191 aa). Positions 281 to 295 are enriched in low complexity; sequence QSQQEQSTQYQVGQS. The disordered stretch occupies residues 281–311; that stretch reads QSQQEQSTQYQVGQSPQYQEGQSTQYQSGQS. A compositionally biased stretch (polar residues) spans 296-311; the sequence is PQYQEGQSTQYQSGQS. In terms of domain architecture, Cupin type-1 2 spans 330 to 479; that stretch reads QNIENPKRAD…AYRISRQESQ (150 aa). The disordered stretch occupies residues 496-518; it reads FAQTGSQSYQDEGESSSTEKASE.

Belongs to the 11S seed storage protein (globulins) family. Hexamer; each subunit is composed of an acidic and a basic chain derived from a single precursor and linked by a disulfide bond.

This is a seed storage protein. The chain is 12S seed storage globulin 1 from Avena sativa (Oat).